The sequence spans 316 residues: Ribose-phosphate pyrophosphokinase (316 aa).

ATP contacts are provided by residues 37–39 (DGE) and 96–97 (RQ). His131 and Asp171 together coordinate Mg(2+). Residue Lys195 is part of the active site. Residues Arg197, Asp221, and 225–229 (DTGGT) contribute to the D-ribose 5-phosphate site.

This sequence belongs to the ribose-phosphate pyrophosphokinase family. Class I subfamily. In terms of assembly, homohexamer. The cofactor is Mg(2+).

It localises to the cytoplasm. The catalysed reaction is D-ribose 5-phosphate + ATP = 5-phospho-alpha-D-ribose 1-diphosphate + AMP + H(+). It functions in the pathway metabolic intermediate biosynthesis; 5-phospho-alpha-D-ribose 1-diphosphate biosynthesis; 5-phospho-alpha-D-ribose 1-diphosphate from D-ribose 5-phosphate (route I): step 1/1. Its function is as follows. Involved in the biosynthesis of the central metabolite phospho-alpha-D-ribosyl-1-pyrophosphate (PRPP) via the transfer of pyrophosphoryl group from ATP to 1-hydroxyl of ribose-5-phosphate (Rib-5-P). In Haemophilus ducreyi (strain 35000HP / ATCC 700724), this protein is Ribose-phosphate pyrophosphokinase.